The primary structure comprises 72 residues: Probable transcription factor elt-4 (72 aa).

The segment at 16 to 40 (CSNCNGTNTTLWRRKAEGDPVCNAC) adopts a GATA-type zinc-finger fold.

Its subcellular location is the nucleus. In terms of biological role, probable transcription factor. Plays a role in regulating heme-dependent expression of heme transporter hrg-1. Modulates lifespan in a daf-16-dependent manner. In Caenorhabditis elegans, this protein is Probable transcription factor elt-4.